The chain runs to 259 residues: GTP cyclohydrolase FolE2 (259 aa).

This sequence belongs to the GTP cyclohydrolase IV family.

It catalyses the reaction GTP + H2O = 7,8-dihydroneopterin 3'-triphosphate + formate + H(+). Its pathway is cofactor biosynthesis; 7,8-dihydroneopterin triphosphate biosynthesis; 7,8-dihydroneopterin triphosphate from GTP: step 1/1. In terms of biological role, converts GTP to 7,8-dihydroneopterin triphosphate. The sequence is that of GTP cyclohydrolase FolE2 from Nitratidesulfovibrio vulgaris (strain DSM 19637 / Miyazaki F) (Desulfovibrio vulgaris).